Here is a 461-residue protein sequence, read N- to C-terminus: BSD domain-containing protein 1 (461 aa).

Phosphoserine is present on residues Ser123 and Ser197. The BSD domain maps to 177 to 229 (WLSQFCLEEKKGEISELLVGSPSIRALYTKMVPAAVSHSEFWHRYFYKVHQLE). The disordered stretch occupies residues 239–384 (KQRAEQSISE…SGPEPRPPAR (146 aa)). Over residues 250-259 (PGWEEEEEEL) the composition is skewed to acidic residues. A compositionally biased stretch (low complexity) spans 295 to 318 (LVTPVEPPTEVTPSESSESVSLVT). Thr387 bears the Phosphothreonine mark. Residues 398-430 (VFELNSDSGKSTPSNNGKKGSSTDISEDWEKDF) form a disordered region. Positions 402–421 (NSDSGKSTPSNNGKKGSSTD) are enriched in polar residues. A phosphoserine mark is found at Ser418, Ser419, and Ser449.

In Bos taurus (Bovine), this protein is BSD domain-containing protein 1 (BSDC1).